A 507-amino-acid polypeptide reads, in one-letter code: Chromosomal replication initiator protein DnaA (507 aa).

The segment at 1–72 is domain I, interacts with DnaA modulators; sequence MNNYNKIWEI…KKITKLKFEE (72 aa). The interval 72–162 is domain II; the sequence is EKIIIEFVSE…KISFNKYNYG (91 aa). The interval 163–384 is domain III, AAA+ region; sequence NTNPKYSFDN…GALLRLLNYA (222 aa). ATP is bound by residues G207, G209, K210, and T211. Residues 385 to 507 are domain IV, binds dsDNA; sequence QTFGYDIDIN…LELILKKINS (123 aa).

This sequence belongs to the DnaA family. In terms of assembly, oligomerizes as a right-handed, spiral filament on DNA at oriC.

Its subcellular location is the cytoplasm. Functionally, plays an essential role in the initiation and regulation of chromosomal replication. ATP-DnaA binds to the origin of replication (oriC) to initiate formation of the DNA replication initiation complex once per cell cycle. Binds the DnaA box (a 9 base pair repeat at the origin) and separates the double-stranded (ds)DNA. Forms a right-handed helical filament on oriC DNA; dsDNA binds to the exterior of the filament while single-stranded (ss)DNA is stabiized in the filament's interior. The ATP-DnaA-oriC complex binds and stabilizes one strand of the AT-rich DNA unwinding element (DUE), permitting loading of DNA polymerase. After initiation quickly degrades to an ADP-DnaA complex that is not apt for DNA replication. Binds acidic phospholipids. This is Chromosomal replication initiator protein DnaA from Onion yellows phytoplasma (strain OY-M).